Reading from the N-terminus, the 427-residue chain is Serine--tRNA ligase (427 aa).

Thr-229–Glu-231 contacts L-serine. Arg-260–Glu-262 serves as a coordination point for ATP. Glu-283 contributes to the L-serine binding site. An ATP-binding site is contributed by Glu-347–Ser-350. Ser-383 contributes to the L-serine binding site.

This sequence belongs to the class-II aminoacyl-tRNA synthetase family. Type-1 seryl-tRNA synthetase subfamily. In terms of assembly, homodimer. The tRNA molecule binds across the dimer.

Its subcellular location is the cytoplasm. The catalysed reaction is tRNA(Ser) + L-serine + ATP = L-seryl-tRNA(Ser) + AMP + diphosphate + H(+). It carries out the reaction tRNA(Sec) + L-serine + ATP = L-seryl-tRNA(Sec) + AMP + diphosphate + H(+). It participates in aminoacyl-tRNA biosynthesis; selenocysteinyl-tRNA(Sec) biosynthesis; L-seryl-tRNA(Sec) from L-serine and tRNA(Sec): step 1/1. Its function is as follows. Catalyzes the attachment of serine to tRNA(Ser). Is also able to aminoacylate tRNA(Sec) with serine, to form the misacylated tRNA L-seryl-tRNA(Sec), which will be further converted into selenocysteinyl-tRNA(Sec). This Oleidesulfovibrio alaskensis (strain ATCC BAA-1058 / DSM 17464 / G20) (Desulfovibrio alaskensis) protein is Serine--tRNA ligase.